The sequence spans 351 residues: c-di-GMP synthase (351 aa).

It belongs to the CD-NTase family. E05 subfamily.

The enzyme catalyses 2 GTP = 3',3'-c-di-GMP + 2 diphosphate. Cyclic nucleotide synthase (second messenger synthase) of a CBASS antivirus system. CBASS (cyclic oligonucleotide-based antiphage signaling system) provides immunity against bacteriophage. The CD-NTase protein synthesizes cyclic nucleotides in response to infection; these serve as specific second messenger signals. The signals activate a diverse range of effectors, leading to bacterial cell death and thus abortive phage infection. A type I-D(GG) CBASS system. Its function is as follows. Cyclic dinucleotide synthase that catalyzes the synthesis of c-di-GMP, has no activity with other NTP substrates. The polypeptide is c-di-GMP synthase (cdnE) (Capnocytophaga granulosa (strain ATCC 51502 / DSM 11449 / JCM 8566 / LMG 16022 / NCTC 12948 / B0611)).